The primary structure comprises 243 residues: MSLRGQVQIARSVFLLRIYILIWVQCLILMSVCAFCWLVLPHRLEQLFSSVRLTLSCLMISIVCLGLLRWAEPNFPKNVWILLTYTLLTSVAVTASGFHFSHRSVIYAMVATVTLFCFLTLATYLFARDVELQRSLLTGASTLILLLFAVFSLFPEAVSEILVMIAGLAVIVTSVVCDTQDILHDIEYESYIPGALCLYMDLMYLFVSVLYFMPSEPGSAHTAQTTVAATVAATAAASPQFVS.

7 helical membrane passes run 20–40, 47–67, 80–100, 106–126, 143–163, 164–184, and 192–212; these read ILIW…WLVL, LFSS…CLGL, WILL…GFHF, IYAM…TYLF, LILL…EILV, MIAG…DILH, and IPGA…VLYF.

Belongs to the cytomegalovirus US12 family.

It is found in the host membrane. The sequence is that of Membrane protein US21 (US21) from Human cytomegalovirus (strain Merlin) (HHV-5).